Consider the following 390-residue polypeptide: Calcium-binding and spermatid-specific protein 1 (390 aa).

Disordered regions lie at residues Met-1–Glu-23, Ala-82–Ile-109, and Thr-146–Asp-225. Residues Glu-162–Thr-174 are compositionally biased toward acidic residues. Low complexity predominate over residues Thr-184–Asp-193. A phosphoserine mark is found at Ser-251 and Ser-267. Thr-280 is subject to Phosphothreonine; by CK2. At Ser-312 the chain carries Phosphoserine. Residues Glu-330–Ala-344 show a composition bias toward basic and acidic residues. Residues Glu-330–Met-390 form a disordered region. Residues Ser-346, Ser-356, Ser-371, and Ser-375 each carry the phosphoserine modification. Residues Ser-346–Ser-364 show a composition bias toward polar residues.

In terms of tissue distribution, expressed in seminiferous tubules of the testis in step 10 spermatids (stage X), subsequently increasing to reach maximal levels of step 18 elongated spermatids (stage VI) (at protein level). Strongly expressed in testis. Weakly expressed in olfactory epithelium. Expressed in spermatids of seminiferous tubules at steps 4-14 (stages IV to XIV of the seminiferous epithelium classification).

The protein localises to the cytoplasm. Its subcellular location is the mitochondrion inner membrane. The protein resides in the cell projection. It is found in the cilium. It localises to the flagellum. The protein localises to the cytoplasmic vesicle. Its subcellular location is the secretory vesicle. The protein resides in the acrosome. Functionally, calcium-binding protein. Essential for maintaining the structural integrity of the sperm flagella. This is Calcium-binding and spermatid-specific protein 1 (Cabs1) from Rattus norvegicus (Rat).